The primary structure comprises 210 residues: Ribosomal RNA large subunit methyltransferase E (210 aa).

Residues Gly-61, Trp-63, Asp-81, Asp-97, and Asp-122 each contribute to the S-adenosyl-L-methionine site. The active-site Proton acceptor is Lys-162.

This sequence belongs to the class I-like SAM-binding methyltransferase superfamily. RNA methyltransferase RlmE family.

The protein localises to the cytoplasm. The enzyme catalyses uridine(2552) in 23S rRNA + S-adenosyl-L-methionine = 2'-O-methyluridine(2552) in 23S rRNA + S-adenosyl-L-homocysteine + H(+). In terms of biological role, specifically methylates the uridine in position 2552 of 23S rRNA at the 2'-O position of the ribose in the fully assembled 50S ribosomal subunit. The polypeptide is Ribosomal RNA large subunit methyltransferase E (Xanthomonas axonopodis pv. citri (strain 306)).